Here is a 224-residue protein sequence, read N- to C-terminus: Zinc finger C4H2 domain-containing protein (224 aa).

Residues 12-97 (ENIKEIRNKT…NKLLESTRRL (86 aa)) adopt a coiled-coil conformation. Disordered stretches follow at residues 166–185 (QAAR…QPPP) and 204–224 (PLCK…KPDE). The segment at 189 to 206 (CLSCHQQIHRNAPICPLC) adopts a C4H2-type zinc-finger fold. A compositionally biased stretch (basic residues) spans 208–224 (AKSRSRNPKKPKRKPDE).

Its subcellular location is the nucleus. It is found in the cytoplasm. The protein resides in the postsynaptic cell membrane. Plays a role in GABAergic and V2 interneurons differentiation. Involved in motoneuron development and in neuromuscular junction formation. The polypeptide is Zinc finger C4H2 domain-containing protein (zc4h2) (Danio rerio (Zebrafish)).